Consider the following 529-residue polypeptide: Ectonucleoside triphosphate diphosphohydrolase 3 (529 aa).

Residues 1 to 22 are Cytoplasmic-facing; the sequence is MFTVLTRQPCEQAGLKALYRTP. Residues 23–43 traverse the membrane as a helical segment; that stretch reads TIIALVVLLVSIVVLVSITVI. The Extracellular segment spans residues 44-485; that stretch reads QIHKQEVLPP…PLIRLPIEPP (442 aa). An N-linked (GlcNAc...) asparagine glycan is attached at asparagine 81. Residues cysteine 92 and cysteine 116 are joined by a disulfide bond. N-linked (GlcNAc...) asparagine glycosylation occurs at asparagine 149. Glutamate 182 acts as the Proton acceptor in catalysis. Position 222–226 (222–226) interacts with ATP; the sequence is GASTQ. The N-linked (GlcNAc...) asparagine glycan is linked to asparagine 238. 3 disulfides stabilise this stretch: cysteine 261/cysteine 308, cysteine 289/cysteine 334, and cysteine 347/cysteine 353. Asparagine 381, asparagine 392, asparagine 402, and asparagine 454 each carry an N-linked (GlcNAc...) asparagine glycan. The cysteines at positions 399 and 422 are disulfide-linked. The chain crosses the membrane as a helical span at residues 486–506; the sequence is VFVGTLAFFTAAALLCLAFLA. Over 507 to 529 the chain is Cytoplasmic; sequence YLCSATRRKRHSEHAFDHAVDSD.

This sequence belongs to the GDA1/CD39 NTPase family. Ca(2+) is required as a cofactor. It depends on Mg(2+) as a cofactor. In terms of tissue distribution, expressed in adult brain, pancreas, spleen and prostate. Moderate or low expression is seen in most tissues. Not expressed in liver and peripheral blood leukocytes.

It is found in the cell membrane. The enzyme catalyses a ribonucleoside 5'-triphosphate + 2 H2O = a ribonucleoside 5'-phosphate + 2 phosphate + 2 H(+). Functionally, has a threefold preference for the hydrolysis of ATP over ADP. This Homo sapiens (Human) protein is Ectonucleoside triphosphate diphosphohydrolase 3 (ENTPD3).